The primary structure comprises 81 residues: Putative snRNP Sm-like protein (81 aa).

Residues 13–81 (RPLDALGNSL…RGDNIVYISP (69 aa)) enclose the Sm domain.

It belongs to the snRNP Sm proteins family.

This Methanothermobacter thermautotrophicus (strain ATCC 29096 / DSM 1053 / JCM 10044 / NBRC 100330 / Delta H) (Methanobacterium thermoautotrophicum) protein is Putative snRNP Sm-like protein.